Reading from the N-terminus, the 234-residue chain is Mediator of RNA polymerase II transcription subunit 4 (234 aa).

Residues 71–124 (HQEAYRRLVEKKNEVAGLEMRVRGLVKRLEEGRKELEGMIDQGERSLEDIEKSE) are a coiled coil. The interval 188 to 234 (GVVGEEQKAPQKVEERREHVEHEESDRRYDPNAVFQLDLNSDESDED) is disordered. Over residues 189 to 217 (VVGEEQKAPQKVEERREHVEHEESDRRYD) the composition is skewed to basic and acidic residues.

Belongs to the Mediator complex subunit 4 family. In terms of assembly, component of the Mediator complex.

The protein localises to the nucleus. Functionally, component of the Mediator complex, a coactivator involved in the regulated transcription of nearly all RNA polymerase II-dependent genes. Mediator functions as a bridge to convey information from gene-specific regulatory proteins to the basal RNA polymerase II transcription machinery. Mediator is recruited to promoters by direct interactions with regulatory proteins and serves as a scaffold for the assembly of a functional preinitiation complex with RNA polymerase II and the general transcription factors. The sequence is that of Mediator of RNA polymerase II transcription subunit 4 (MED4) from Cryptococcus neoformans var. neoformans serotype D (strain JEC21 / ATCC MYA-565) (Filobasidiella neoformans).